The following is a 150-amino-acid chain: 6,7-dimethyl-8-ribityllumazine synthase (150 aa).

5-amino-6-(D-ribitylamino)uracil is bound by residues Phe11, 43–45 (VYD), and 67–69 (AVI). 72 to 73 (AT) is a (2S)-2-hydroxy-3-oxobutyl phosphate binding site. The Proton donor role is filled by His75. Leu100 serves as a coordination point for 5-amino-6-(D-ribitylamino)uracil. Position 115 (Arg115) interacts with (2S)-2-hydroxy-3-oxobutyl phosphate.

This sequence belongs to the DMRL synthase family.

It carries out the reaction (2S)-2-hydroxy-3-oxobutyl phosphate + 5-amino-6-(D-ribitylamino)uracil = 6,7-dimethyl-8-(1-D-ribityl)lumazine + phosphate + 2 H2O + H(+). It functions in the pathway cofactor biosynthesis; riboflavin biosynthesis; riboflavin from 2-hydroxy-3-oxobutyl phosphate and 5-amino-6-(D-ribitylamino)uracil: step 1/2. Catalyzes the formation of 6,7-dimethyl-8-ribityllumazine by condensation of 5-amino-6-(D-ribitylamino)uracil with 3,4-dihydroxy-2-butanone 4-phosphate. This is the penultimate step in the biosynthesis of riboflavin. The protein is 6,7-dimethyl-8-ribityllumazine synthase of Pyrobaculum arsenaticum (strain DSM 13514 / JCM 11321 / PZ6).